The primary structure comprises 318 residues: Porphobilinogen deaminase (318 aa).

Residue Cys-241 is modified to S-(dipyrrolylmethanemethyl)cysteine.

The protein belongs to the HMBS family. Monomer. The cofactor is dipyrromethane.

It carries out the reaction 4 porphobilinogen + H2O = hydroxymethylbilane + 4 NH4(+). It functions in the pathway porphyrin-containing compound metabolism; protoporphyrin-IX biosynthesis; coproporphyrinogen-III from 5-aminolevulinate: step 2/4. Its function is as follows. Tetrapolymerization of the monopyrrole PBG into the hydroxymethylbilane pre-uroporphyrinogen in several discrete steps. This Geotalea uraniireducens (strain Rf4) (Geobacter uraniireducens) protein is Porphobilinogen deaminase.